A 145-amino-acid chain; its full sequence is Superoxide dismutase [Mn/Fe] (145 aa).

The Fe(3+) site is built by His10 and His64. Mn(2+)-binding residues include His10 and His64.

The protein belongs to the iron/manganese superoxide dismutase family. It depends on Mn(2+) as a cofactor. The cofactor is Fe(3+).

The enzyme catalyses 2 superoxide + 2 H(+) = H2O2 + O2. Its function is as follows. Destroys superoxide anion radicals which are normally produced within the cells and which are toxic to biological systems. Catalyzes the dismutation of superoxide anion radicals into O2 and H2O2 by successive reduction and oxidation of the transition metal ion at the active site. In Streptococcus salivarius, this protein is Superoxide dismutase [Mn/Fe] (sodA).